The sequence spans 790 residues: PGC-1 and ERR-induced regulator in muscle protein 1 (790 aa).

Disordered stretches follow at residues 38-391 (LLSS…TPIS), 425-449 (VASS…STPV), 507-545 (SVAG…EAVA), and 626-648 (QRSR…APIP). The segment covering 40–52 (SSDIDQGDSSGSS) has biased composition (low complexity). 2 stretches are compositionally biased toward polar residues: residues 80-89 (ATQQPVSRSQ) and 98-107 (TGQQTPSTSA). Positions 111 to 123 (APPSLGPGASPPS) are enriched in low complexity. Residues 146–157 (APRPPGEPPGSP) show a composition bias toward pro residues. A compositionally biased stretch (low complexity) spans 158–169 (KSPGHSTGSQRP). Residues 170 to 179 (PDSPGAPPRS) are compositionally biased toward pro residues. The span at 366–391 (KPQSDTAVSTPASEPQSSVALSTPIS) shows a compositional bias: polar residues. Over residues 515-532 (KPGSGQASARPSAPQTAT) the composition is skewed to polar residues. Over residues 635–648 (EPLPRADPVPAPIP) the composition is skewed to pro residues.

In terms of tissue distribution, muscle-specific expression is increased by endurance exercise.

The protein localises to the cytoplasm. It is found in the nucleus. Functionally, regulates the expression of selective PPARGC1A/B and ESRRA/B/G target genes with roles in glucose and lipid metabolism, energy transfer, contractile function, muscle mitochondrial biogenesis and oxidative capacity. Required for the efficient induction of MT-CO2, MT-CO3, COX4I1, TFB1M, TFB2M, POLRMT and SIRT3 by PPARGC1A. Positively regulates the PPARGC1A/ESRRG-induced expression of CKMT2, TNNI3 and SLC2A4 and negatively regulates the PPARGC1A/ESRRG-induced expression of PDK4. In Homo sapiens (Human), this protein is PGC-1 and ERR-induced regulator in muscle protein 1 (PERM1).